Reading from the N-terminus, the 501-residue chain is Maturase K (501 aa).

The protein belongs to the intron maturase 2 family. MatK subfamily.

The protein localises to the plastid. It localises to the chloroplast. Its function is as follows. Usually encoded in the trnK tRNA gene intron. Probably assists in splicing its own and other chloroplast group II introns. This chain is Maturase K, found in Amborella trichopoda.